The following is a 375-amino-acid chain: DNA replication and repair protein RecF (375 aa).

Residue 30–37 participates in ATP binding; the sequence is GENAQGKT.

It belongs to the RecF family.

It is found in the cytoplasm. The RecF protein is involved in DNA metabolism; it is required for DNA replication and normal SOS inducibility. RecF binds preferentially to single-stranded, linear DNA. It also seems to bind ATP. The protein is DNA replication and repair protein RecF of Bacillus cereus (strain B4264).